Here is a 231-residue protein sequence, read N- to C-terminus: Large ribosomal subunit protein uL1 (231 aa).

Belongs to the universal ribosomal protein uL1 family. As to quaternary structure, part of the 50S ribosomal subunit.

Functionally, binds directly to 23S rRNA. The L1 stalk is quite mobile in the ribosome, and is involved in E site tRNA release. Protein L1 is also a translational repressor protein, it controls the translation of the L11 operon by binding to its mRNA. This is Large ribosomal subunit protein uL1 from Methylocella silvestris (strain DSM 15510 / CIP 108128 / LMG 27833 / NCIMB 13906 / BL2).